A 404-amino-acid polypeptide reads, in one-letter code: Probable cysteine protease atg4 (404 aa).

The active-site Nucleophile is the Cys-133. Catalysis depends on residues Asp-307 and His-309.

This sequence belongs to the peptidase C54 family.

It localises to the cytoplasm. The protein resides in the nucleus. Its subcellular location is the preautophagosomal structure. The catalysed reaction is [protein]-C-terminal L-amino acid-glycyl-phosphatidylethanolamide + H2O = [protein]-C-terminal L-amino acid-glycine + a 1,2-diacyl-sn-glycero-3-phosphoethanolamine. In terms of biological role, cysteine protease that plays a key role in cytoplasm to vacuole transport (Cvt) and autophagy by mediating both proteolytic activation and delipidation of ATG8. Required for selective autophagic degradation of the nucleus (nucleophagy) as well as for mitophagy which contributes to regulate mitochondrial quantity and quality by eliminating the mitochondria to a basal level to fulfill cellular energy requirements and preventing excess ROS production. The protease activity is required for proteolytic activation of ATG8: cleaves the C-terminal amino acid of ATG8 to reveal a C-terminal glycine. ATG8 ubiquitin-like activity requires the exposure of the glycine at the C-terminus for its conjugation to phosphatidylethanolamine (PE) and its insertion to membranes, which is necessary for autophagy. The ATG8-PE conjugate mediates tethering between adjacent membranes and stimulates membrane hemifusion, leading to expansion of the autophagosomal membrane during autophagy. In addition to the protease activity, also catalyzes deconjugation of PE-conjugated forms of ATG8 during macroautophagy: ATG8 delipidation is required to release the protein from membranes, which facilitates multiple events during macroautophagy, and especially for efficient autophagosome biogenesis, the assembly of ATG9-containing tubulovesicular clusters into phagophores/autophagosomes, and for the disassembly of PAS-associated ATG components. ATG8 delipidation by ATG4 also recycles ATG8-PE generated on inappropriate membranes to maintain a reservoir of unlipidated ATG8 that is required for autophagosome formation at the PAS. The protein is Probable cysteine protease atg4 (atg4) of Aspergillus niger (strain ATCC MYA-4892 / CBS 513.88 / FGSC A1513).